The primary structure comprises 422 residues: Solanesyl diphosphate synthase 3, chloroplastic/mitochondrial (422 aa).

A chloroplast and mitochondrion-targeting transit peptide spans 1-32 (MLFTRSVARISSKFLRNRSFYGSSQSLASHRF). Positions 125, 128, and 174 each coordinate isopentenyl diphosphate. Mg(2+) contacts are provided by Asp-181 and Asp-185. Position 190 (Arg-190) interacts with an all-trans-polyprenyl diphosphate. Arg-191 serves as a coordination point for isopentenyl diphosphate. An all-trans-polyprenyl diphosphate is bound by residues Lys-267, Thr-268, Gln-305, and Lys-322.

This sequence belongs to the FPP/GGPP synthase family. Homodimer. Mg(2+) is required as a cofactor. In terms of tissue distribution, ubiquitous. Highest expression in seeds and shoot apical meristem.

Its subcellular location is the plastid. The protein resides in the chloroplast. It is found in the mitochondrion. It catalyses the reaction 5 isopentenyl diphosphate + (2E,6E,10E)-geranylgeranyl diphosphate = all-trans-nonaprenyl diphosphate + 5 diphosphate. In terms of biological role, may be involved in the supply of solanesyl diphosphate for ubiquinone-9 (UQ-9) biosynthesis in mitochondria. Synthesizes C25 to C45 medium / long-chain products depending on the type of substrate available. Can use geranyl diphosphate, farnesyl diphosphate or geranylgeranyl diphosphate as substrates, but not dimethylallyl diphosphate. The polypeptide is Solanesyl diphosphate synthase 3, chloroplastic/mitochondrial (Arabidopsis thaliana (Mouse-ear cress)).